The primary structure comprises 87 residues: Large ribosomal subunit protein eL33 (87 aa).

It belongs to the eukaryotic ribosomal protein eL33 family.

This Pyrococcus horikoshii (strain ATCC 700860 / DSM 12428 / JCM 9974 / NBRC 100139 / OT-3) protein is Large ribosomal subunit protein eL33.